The following is an 888-amino-acid chain: Serine/threonine-protein phosphatase 1 regulatory subunit 10 (888 aa).

Positions 1 to 348 (MGSGPIDPKE…EPAPPAEPMD (348 aa)) are interaction with TOX4. The 75-residue stretch at 73 to 147 (KLLNNWLTYS…SDWMAVIRSQ (75 aa)) folds into the TFIIS N-terminal domain. Disordered stretches follow at residues 147-213 (QSST…STGL), 247-270 (SATAAPGDAAPPAEKKYKPLNTAP), 306-400 (KKKK…KTVT), and 534-853 (VETL…HGGD). Composition is skewed to basic and acidic residues over residues 153 to 166 (AEKDKKKRKEEGKS) and 174 to 196 (PLTEVKAETRAEEAPEKKKEKPK). Lysine 179 is covalently cross-linked (Glycyl lysine isopeptide (Lys-Gly) (interchain with G-Cter in SUMO2)). Positions 248–258 (ATAAPGDAAPP) are enriched in low complexity. Lysine 262 is covalently cross-linked (Glycyl lysine isopeptide (Lys-Gly) (interchain with G-Cter in SUMO2)). At serine 313 the chain carries Phosphoserine. Residues 325–334 (KTSTEQSTAK) show a composition bias toward polar residues. Serine 382 carries the phosphoserine modification. Positions 388–417 (QLTRKGRKRKTVTWPEEGKLREYFYFELDE) are necessary for interaction with PPP1CA. Positions 393–408 (GRKRKTVTWPEEGKLR) are necessary for interaction with PPP1CC. The PP1-binding motif signature appears at 394 to 423 (RKRKTVTWPEEGKLREYFYFELDETERVNV). A Phosphothreonine modification is found at threonine 398. An interaction with WDR82 region spans residues 418 to 619 (TERVNVNKIK…LKQMLVPHGL (202 aa)). The span at 540–551 (GGSGGSPDGAGG) shows a compositional bias: gly residues. Serine 545 and serine 591 each carry phosphoserine. The segment covering 583–595 (EILTSIMGSPNSH) has biased composition (polar residues). Residues 596-611 (PSEELLKQPDYSDKLK) show a composition bias toward basic and acidic residues. Pro residues predominate over residues 644–655 (PPGPGGPMPGPH). Arginine 665 is modified (omega-N-methylarginine). Over residues 674-690 (RGGDPFWDGPGDPMRGG) the composition is skewed to low complexity. Omega-N-methylarginine is present on residues arginine 693 and arginine 737. Gly residues-rich tracts occupy residues 724–762 (ARGGRSGGGPPNGRGGPGGGGMVGGGGHRPHEGPGGSMG) and 784–794 (GPGGNMGGSGG). Over residues 811 to 851 (PHDVPSHRGHDHRGPPPHEHRGHDGHGGGGHRGHDGGHSHG) the composition is skewed to basic and acidic residues. The C3H1-type zinc-finger motif lies at 854–882 (MSNRPVCRHFMMKGNCRYENNCAFYHPGV).

In terms of assembly, component of the PNUTS-PP1 complex (also named PTW/PP1 complex), composed of PPP1R10/PNUTS, TOX4, WDR82, and PPP1CA (or PPP1CB or PPP1CC). In terms of processing, phosphorylated on Ser-398 by PKA within the region necessary for interaction with PPP1CA.

The protein localises to the nucleus. It localises to the chromosome. Substrate-recognition component of the PNUTS-PP1 protein phosphatase complex, a protein phosphatase 1 (PP1) complex that promotes RNA polymerase II transcription pause-release, allowing transcription elongation. Promoter-proximal pausing by RNA polymerase II is a transcription halt following transcription initiation but prior to elongation, which acts as a checkpoint to control that transcripts are favorably configured for transcriptional elongation. The PNUTS-PP1 complex mediates the release of RNA polymerase II from promoter-proximal region of genes by catalyzing dephosphorylation of proteins involved in transcription, such as AFF4, CDK9, MEPCE, INTS12, NCBP1, POLR2M/GDOWN1 and SUPT6H. The PNUTS-PP1 complex also regulates RNA polymerase II transcription termination by mediating dephosphorylation of SUPT5H in termination zones downstream of poly(A) sites, thereby promoting deceleration of RNA polymerase II transcription. PNUTS-PP1 complex is also involved in the response to replication stress by mediating dephosphorylation of POLR2A at 'Ser-5' of the CTD, promoting RNA polymerase II degradation. The PNUTS-PP1 complex also plays a role in the control of chromatin structure and cell cycle progression during the transition from mitosis into interphase. PNUTS-PP1 complex mediates dephosphorylation of MYC, promoting MYC stability by preventing MYC ubiquitination by the SCF(FBXW7) complex. In addition to acts as a substrate-recognition component, PPP1R10/PNUTS also acts as a nuclear targeting subunit for the PNUTS-PP1 complex. In some context, PPP1R10/PNUTS also acts as an inhibitor of protein phosphatase 1 (PP1) activity by preventing access to substrates, such as RB. This Mus musculus (Mouse) protein is Serine/threonine-protein phosphatase 1 regulatory subunit 10.